The chain runs to 333 residues: Ribosomal RNA small subunit methyltransferase C (333 aa).

Belongs to the methyltransferase superfamily. RsmC family. As to quaternary structure, monomer.

The protein resides in the cytoplasm. The catalysed reaction is guanosine(1207) in 16S rRNA + S-adenosyl-L-methionine = N(2)-methylguanosine(1207) in 16S rRNA + S-adenosyl-L-homocysteine + H(+). In terms of biological role, specifically methylates the guanine in position 1207 of 16S rRNA in the 30S particle. The polypeptide is Ribosomal RNA small subunit methyltransferase C (Chromohalobacter salexigens (strain ATCC BAA-138 / DSM 3043 / CIP 106854 / NCIMB 13768 / 1H11)).